A 335-amino-acid chain; its full sequence is Pro-cathepsin H (335 aa).

The signal sequence occupies residues 1–22 (MWATLPLLCAGAWLLGVPVCGA). A propeptide spans 23-97 (AELCVNSLEK…AEIKHKYLWS (75 aa)) (activation peptide). Asn-101 carries an N-linked (GlcNAc...) asparagine glycan. Cystine bridges form between Cys-102–Cys-327, Cys-138–Cys-181, Cys-172–Cys-214, and Cys-272–Cys-322. A propeptide spanning residues 106-115 (KSNYLRGTGP) is cleaved from the precursor. Cys-141 is a catalytic residue. An N-linked (GlcNAc...) asparagine glycan is attached at Asn-230. Catalysis depends on residues His-281 and Asn-301.

The protein belongs to the peptidase C1 family. Composed of a mini chain and a large chain. The large chain may be split into heavy and light chain. All chains are held together by disulfide bonds.

The protein resides in the lysosome. The enzyme catalyses Hydrolysis of proteins, acting as an aminopeptidase (notably, cleaving Arg-|-Xaa bonds) as well as an endopeptidase.. Functionally, important for the overall degradation of proteins in lysosomes. The chain is Pro-cathepsin H (CTSH) from Homo sapiens (Human).